The sequence spans 469 residues: Calcium/calmodulin-dependent protein kinase type IV (469 aa).

Phosphoserine; by autocatalysis occurs at positions 11 and 12. The region spanning 42-296 (FEVESELGRG…TFQALQHPWV (255 aa)) is the Protein kinase domain. Residues 48–56 (LGRGATSIV) and K71 contribute to the ATP site. Residue T53 is glycosylated (O-linked (GlcNAc) threonine). A glycan (O-linked (GlcNAc) serine) is linked at S54. A glycan (O-linked (GlcNAc) serine) is linked at S133. D160 functions as the Proton acceptor in the catalytic mechanism. S185 is a glycosylation site (O-linked (GlcNAc) serine). Phosphothreonine is present on T196. Residues 297–336 (TGKAANFVHMDTAQKKLQEFNARRKLKAAVKAVVASSRLG) form an autoinhibitory domain region. The interval 302–319 (NFVHMDTAQKKLQEFNAR) is PP2A-binding. The calmodulin-binding stretch occupies residues 318-337 (ARRKLKAAVKAVVASSRLGS). The residue at position 332 (S332) is a Phosphoserine; by autocatalysis. Residues 336–469 (GSASSSHTSI…PQQDAIQPEY (134 aa)) are disordered. At S337 the chain carries Phosphoserine. O-linked (GlcNAc) serine glycosylation is found at S340, S341, and S352. The segment covering 360–374 (DAKDSTDLLGKKMQE) has biased composition (basic and acidic residues). Residues 375–388 (EDQEEDQVEAEASA) are compositionally biased toward acidic residues. Over residues 389–409 (DEMRKLQSEEVEKDAGVKEEE) the composition is skewed to basic and acidic residues. A compositionally biased stretch (acidic residues) spans 417–426 (DPEDELETDD). Positions 427–441 (PEMKRDSEEKLKSVE) are enriched in basic and acidic residues. Phosphoserine is present on residues S433 and S439. Residues 442-453 (EEMDPMTEEEAP) show a composition bias toward acidic residues.

This sequence belongs to the protein kinase superfamily. CAMK Ser/Thr protein kinase family. CaMK subfamily. As to quaternary structure, monomer. Interacts with protein phosphatase 2A (PPP2CA/PPP2CB); the interaction is mutually exclusive with binding to Ca(2+)/calmodulin. Phosphorylated by CaMKK1 and CaMKK2 on Thr-196. Dephosphorylated by protein phosphatase 2A. Autophosphorylated on Ser-11 and Ser-12. Post-translationally, glycosylation at Ser-185 modulates the phosphorylation of CaMK4 at Thr-196 and negatively regulates its activity toward CREB1 in basal conditions and during early inomycin stimulation. Expressed in brain and testis.

The protein localises to the cytoplasm. Its subcellular location is the nucleus. It carries out the reaction L-seryl-[protein] + ATP = O-phospho-L-seryl-[protein] + ADP + H(+). The catalysed reaction is L-threonyl-[protein] + ATP = O-phospho-L-threonyl-[protein] + ADP + H(+). Activated by Ca(2+)/calmodulin. Binding of calmodulin results in conformational change that relieves intrasteric autoinhibition and allows phosphorylation of Thr-196 within the activation loop by CaMKK1 or CaMKK2. Phosphorylation of Thr-196 results in a 10-20-fold increase in total activity to generate Ca(2+)/calmodulin-independent activity. Autophosphorylation of the N-terminus Ser-11 and Ser-12 is required for full activation. Inactivated by protein phosphatase 2A (PPP2CA/PPP2CB) which dephosphorylates Thr-196, thereby terminating autonomous activity and helping to maintain the enzyme in its autoinhibited state. Its function is as follows. Calcium/calmodulin-dependent protein kinase that operates in the calcium-triggered CaMKK-CaMK4 signaling cascade and regulates, mainly by phosphorylation, the activity of several transcription activators, such as CREB1, MEF2D, JUN and RORA, which play pivotal roles in immune response, inflammation, and memory consolidation. In the thymus, regulates the CD4(+)/CD8(+) double positive thymocytes selection threshold during T-cell ontogeny. In CD4 memory T-cells, is required to link T-cell antigen receptor (TCR) signaling to the production of IL2, IFNG and IL4 (through the regulation of CREB and MEF2). Regulates the differentiation and survival phases of osteoclasts and dendritic cells (DCs). Mediates DCs survival by linking TLR4 and the regulation of temporal expression of BCL2. Phosphorylates the transcription activator CREB1 on 'Ser-133' in hippocampal neuron nuclei and contribute to memory consolidation and long term potentiation (LTP) in the hippocampus. Can activate the MAP kinases MAPK1/ERK2, MAPK8/JNK1 and MAPK14/p38 and stimulate transcription through the phosphorylation of ELK1 and ATF2. Can also phosphorylate in vitro CREBBP, PRM2, MEF2A and STMN1/OP18. May be involved in spermatogenesis. The chain is Calcium/calmodulin-dependent protein kinase type IV (Camk4) from Mus musculus (Mouse).